We begin with the raw amino-acid sequence, 741 residues long: uncharacterized protein (741 aa).

Residues methionine 1–alanine 18 form the signal peptide. 3 disordered regions span residues proline 142–aspartate 300, glutamate 423–glycine 528, and glutamate 646–aspartate 681. Residues glutamate 147–threonine 165 show a composition bias toward acidic residues. 2 stretches are compositionally biased toward low complexity: residues valine 183 to glutamate 197 and serine 205 to threonine 266. N-linked (GlcNAc...) asparagine glycans are attached at residues asparagine 232 and asparagine 241. Acidic residues predominate over residues glutamate 423–threonine 432. Residues threonine 433–threonine 451 show a composition bias toward low complexity. N-linked (GlcNAc...) asparagine glycosylation is found at asparagine 461 and asparagine 511. Residues proline 500–asparagine 511 are compositionally biased toward acidic residues. The segment covering glutamate 512–glycine 528 has biased composition (low complexity). Residues glutamate 646–aspartate 656 show a composition bias toward polar residues. A compositionally biased stretch (acidic residues) spans alanine 657–threonine 671. An N-linked (GlcNAc...) asparagine glycan is attached at asparagine 669. Asparagine 719 carries GPI-anchor amidated asparagine lipidation. The propeptide at alanine 720–isoleucine 741 is removed in mature form.

The protein resides in the cell membrane. This is an uncharacterized protein from Candida albicans (strain SC5314 / ATCC MYA-2876) (Yeast).